A 588-amino-acid chain; its full sequence is Adenine deaminase (588 aa).

It belongs to the metallo-dependent hydrolases superfamily. Adenine deaminase family. In terms of assembly, homodimer. The cofactor is Mn(2+).

It carries out the reaction adenine + H2O + H(+) = hypoxanthine + NH4(+). This is Adenine deaminase from Escherichia fergusonii (strain ATCC 35469 / DSM 13698 / CCUG 18766 / IAM 14443 / JCM 21226 / LMG 7866 / NBRC 102419 / NCTC 12128 / CDC 0568-73).